The primary structure comprises 820 residues: DNA mismatch repair protein MutS (820 aa).

615-622 (GPNMAGKS) is a binding site for ATP.

This sequence belongs to the DNA mismatch repair MutS family.

This protein is involved in the repair of mismatches in DNA. It is possible that it carries out the mismatch recognition step. This protein has a weak ATPase activity. The polypeptide is DNA mismatch repair protein MutS (Anaplasma phagocytophilum (strain HZ)).